Consider the following 251-residue polypeptide: Triosephosphate isomerase (251 aa).

Position 9 to 11 (9 to 11) interacts with substrate; it reads NWK. The active-site Electrophile is the His-95. Glu-167 functions as the Proton acceptor in the catalytic mechanism. Substrate-binding positions include Gly-173, Ser-213, and 234-235; that span reads GG. A Phosphoserine modification is found at Ser-213.

This sequence belongs to the triosephosphate isomerase family. In terms of assembly, homodimer.

Its subcellular location is the cytoplasm. It catalyses the reaction D-glyceraldehyde 3-phosphate = dihydroxyacetone phosphate. The protein operates within carbohydrate biosynthesis; gluconeogenesis. It functions in the pathway carbohydrate degradation; glycolysis; D-glyceraldehyde 3-phosphate from glycerone phosphate: step 1/1. Involved in the gluconeogenesis. Catalyzes stereospecifically the conversion of dihydroxyacetone phosphate (DHAP) to D-glyceraldehyde-3-phosphate (G3P). The protein is Triosephosphate isomerase of Bacillus cereus (strain B4264).